The following is a 135-amino-acid chain: Large ribosomal subunit protein uL16c (135 aa).

This sequence belongs to the universal ribosomal protein uL16 family. Part of the 50S ribosomal subunit.

Its subcellular location is the plastid. It localises to the chloroplast. This Jasminum nudiflorum (Winter jasmine) protein is Large ribosomal subunit protein uL16c.